The sequence spans 34 residues: Cytochrome b6-f complex subunit 5 (34 aa).

Residues 5–25 (LLSGIVLGLVPVTLAGLFVTA) traverse the membrane as a helical segment.

It belongs to the PetG family. In terms of assembly, the 4 large subunits of the cytochrome b6-f complex are cytochrome b6, subunit IV (17 kDa polypeptide, PetD), cytochrome f and the Rieske protein, while the 4 small subunits are PetG, PetL, PetM and PetN. The complex functions as a dimer.

The protein localises to the plastid. Its subcellular location is the chloroplast thylakoid membrane. In terms of biological role, component of the cytochrome b6-f complex, which mediates electron transfer between photosystem II (PSII) and photosystem I (PSI), cyclic electron flow around PSI, and state transitions. PetG is required for either the stability or assembly of the cytochrome b6-f complex. The sequence is that of Cytochrome b6-f complex subunit 5 from Oltmannsiellopsis viridis (Marine flagellate).